The chain runs to 332 residues: Processive diacylglycerol alpha-glucosyltransferase (332 aa).

This sequence belongs to the glycosyltransferase group 1 family. Glycosyltransferase 4 subfamily. It depends on Mg(2+) as a cofactor.

It is found in the cell membrane. The enzyme catalyses a 1,2-diacyl-sn-glycerol + UDP-alpha-D-glucose = a 1,2-diacyl-3-O-(alpha-D-glucopyranosyl)-sn-glycerol + UDP + H(+). It catalyses the reaction a 1,2-diacyl-3-O-(alpha-D-glucopyranosyl)-sn-glycerol + UDP-alpha-D-glucose = a 1,2-diacyl-3-O-[alpha-D-glucosyl-(1-&gt; 2)-alpha-D-glucosyl]-sn-glycerol + UDP + H(+). It functions in the pathway glycolipid metabolism; diglucosyl-diacylglycerol biosynthesis. With respect to regulation, activated by the negatively charged lipids phosphatidylglycerol (PG), cardiolipin (CL), nonbilayer-prone 1,3-DAG, 1,2-dioleoylphosphatidylglycerol (DOPG) and 1,2-dioleoylphosphatidylserine (DOPS). Inhibited by 1,2-diacyl-3-O-(alpha-D-galactopyranosyl)-sn-glycerol, 1,2-diacyl-3-O-[6-O-acyl(alpha-D-glucopyranosyl)]-sn-glycerol and 1,2-diacyl-3-O-[alpha-D-glucopyranosyl-(1-&gt;2)-O-(6-O-acyl-alpha-D-glucopyranosyl)]-sn-glycerol. In terms of biological role, processive glucosyltransferase involved in the biosynthesis of both the non-bilayer-prone alpha-monoglucosyldiacylglycerol and the bilayer-forming membrane lipid alpha-diglucosyldiacylglycerol. These are major components for maintaining the anionic lipid surface charge density, for balancing the bilayer to non-bilayer phase equilibria and for keeping a constant lipid bilayer spontaneous curvature (curvature packing stress). Catalyzes the transfer of a glucosyl residue from UDP-Glc to diacylglycerol (DAG) acceptor to form the corresponding alpha-glucosyl-DAG (1,2-diacyl-3-O-(alpha-D-glucopyranosyl)-sn-glycerol), which then acts as acceptor to give alpha-diglucosyl-DAG product (3-O-(alpha-D-glucopyranosyl-alpha-(1-&gt;2)-D-glucopyranosyl)-1,2-diacyl-sn-glycerol). It can only use UDP-Glc as sugar donor. In Acholeplasma laidlawii, this protein is Processive diacylglycerol alpha-glucosyltransferase (dgs).